A 715-amino-acid chain; its full sequence is Fatty acid oxidation complex subunit alpha (715 aa).

Positions 1–190 (MIYEGKAITV…KVGAVDAVVA (190 aa)) are enoyl-CoA hydratase/isomerase. Residue Asp297 participates in substrate binding. Residues 312-715 (KDVKQAAVLG…MAKNGQSFFG (404 aa)) form a 3-hydroxyacyl-CoA dehydrogenase region. NAD(+) is bound by residues Met325, Asp344, 401–403 (VVE), Lys408, and Ser430. The For 3-hydroxyacyl-CoA dehydrogenase activity role is filled by His451. Asn454 contacts NAD(+). Residues Asn501 and Tyr660 each coordinate substrate.

In the N-terminal section; belongs to the enoyl-CoA hydratase/isomerase family. This sequence in the C-terminal section; belongs to the 3-hydroxyacyl-CoA dehydrogenase family. Heterotetramer of two alpha chains (FadB) and two beta chains (FadA).

It catalyses the reaction a (3S)-3-hydroxyacyl-CoA + NAD(+) = a 3-oxoacyl-CoA + NADH + H(+). The catalysed reaction is a (3S)-3-hydroxyacyl-CoA = a (2E)-enoyl-CoA + H2O. It carries out the reaction a 4-saturated-(3S)-3-hydroxyacyl-CoA = a (3E)-enoyl-CoA + H2O. The enzyme catalyses (3S)-3-hydroxybutanoyl-CoA = (3R)-3-hydroxybutanoyl-CoA. It catalyses the reaction a (3Z)-enoyl-CoA = a 4-saturated (2E)-enoyl-CoA. The catalysed reaction is a (3E)-enoyl-CoA = a 4-saturated (2E)-enoyl-CoA. It participates in lipid metabolism; fatty acid beta-oxidation. Its function is as follows. Involved in the aerobic and anaerobic degradation of long-chain fatty acids via beta-oxidation cycle. Catalyzes the formation of 3-oxoacyl-CoA from enoyl-CoA via L-3-hydroxyacyl-CoA. It can also use D-3-hydroxyacyl-CoA and cis-3-enoyl-CoA as substrate. This Pseudomonas fluorescens (strain Pf0-1) protein is Fatty acid oxidation complex subunit alpha.